The following is a 1398-amino-acid chain: Protein timeless (1398 aa).

A necessary for normal circadian rhythm region spans residues 237–268 (VSTLQKLLSLWFEASLSESSEDNESNTSPPKQ). 5 disordered regions span residues 254 to 300 (ESSE…GGMR), 322 to 452 (ARVP…QKFN), 478 to 555 (TKGK…LRRK), 1127 to 1147 (TASS…SSVS), and 1220 to 1239 (NHRT…SSTT). Positions 273 to 290 (SSPMLTSDPTSDSSDNGS) are enriched in low complexity. Residues 291–300 (NGRGMGGGMR) are compositionally biased toward gly residues. Residues 338 to 355 (MTGNDSEQPGSPEQSQPA) are compositionally biased toward polar residues. A compositionally biased stretch (basic and acidic residues) spans 365–375 (EDQRHRQLNEH). Positions 376 to 390 (GEEDEDEDEVEEEEY) are enriched in acidic residues. Polar residues-rich tracts occupy residues 400 to 421 (LNLT…SSAP), 440 to 452 (ASTS…QKFN), and 504 to 515 (QVENQESISTSS). The span at 522–531 (QGKPQHQKPP) shows a compositional bias: low complexity. The short motif at 550–560 (KELRRKKLVKR) is the Nuclear localization signal element.

The protein belongs to the timeless family. Forms a heterodimer with period (PER); the complex then translocates into the nucleus. Post-translationally, phosphorylated with a circadian rhythmicity. Expressed in head, photoreceptors, lateral neurons and glial cells in the lamina and medulla of the optic lobes. Expression follows a light-dark cycle, levels show a significant decrease at the end of the night and then remain low throughout the light period (at protein level).

It is found in the nucleus. Its subcellular location is the cytoplasm. It localises to the perinuclear region. Required for the production of circadian rhythms. The biological cycle depends on the rhythmic formation and nuclear localization of the TIM-PER complex. Light induces the degradation of TIM, which promotes elimination of PER. Nuclear activity of the heterodimer coordinatively regulates PER and TIM transcription through a negative feedback loop. Behaves as a negative element in circadian transcriptional loop. Does not appear to bind DNA, suggesting indirect transcriptional inhibition. The polypeptide is Protein timeless (tim) (Drosophila melanogaster (Fruit fly)).